A 260-amino-acid polypeptide reads, in one-letter code: Tropinone reductase homolog At2g29330 (260 aa).

13–37 (LVTGGASGIGHAIVEELAGFGAKIH) is an NADP(+) binding site. Ser-146 provides a ligand contact to substrate. The active-site Proton acceptor is Tyr-159.

This sequence belongs to the short-chain dehydrogenases/reductases (SDR) family. SDR65C subfamily.

Its function is as follows. Reductase active only on small flexible lipophilic carbonyls. No activity with cyclic monoterpenes, tropinone, nitrogen-containing tropinone analogs, tropine or pseudotropine as substrate. The chain is Tropinone reductase homolog At2g29330 from Arabidopsis thaliana (Mouse-ear cress).